Reading from the N-terminus, the 228-residue chain is L-ribulose-5-phosphate 4-epimerase UlaF (228 aa).

Residues 26 to 27, 43 to 44, and 72 to 73 contribute to the substrate site; these read GN, SG, and SS. Residues Asp-74, His-93, and His-95 each contribute to the Zn(2+) site. Asp-118 functions as the Proton donor/acceptor in the catalytic mechanism. His-167 provides a ligand contact to Zn(2+). The active-site Proton donor/acceptor is Tyr-225.

Belongs to the aldolase class II family. AraD/FucA subfamily. Zn(2+) serves as cofactor.

It catalyses the reaction L-ribulose 5-phosphate = D-xylulose 5-phosphate. The protein operates within cofactor degradation; L-ascorbate degradation; D-xylulose 5-phosphate from L-ascorbate: step 4/4. Catalyzes the isomerization of L-ribulose 5-phosphate to D-xylulose 5-phosphate. Is involved in the anaerobic L-ascorbate utilization. The sequence is that of L-ribulose-5-phosphate 4-epimerase UlaF from Escherichia coli O7:K1 (strain IAI39 / ExPEC).